A 377-amino-acid polypeptide reads, in one-letter code: Probable pectin lyase D (377 aa).

A signal peptide spans 1–17 (MRVSAFALLAAAATAAA). 2 disulfides stabilise this stretch: Cys-80-Cys-99 and Cys-89-Cys-223. Asn-126 is a glycosylation site (N-linked (GlcNAc...) asparagine). Arg-253 is a catalytic residue. An intrachain disulfide couples Cys-321 to Cys-329.

This sequence belongs to the polysaccharide lyase 1 family.

It is found in the secreted. The catalysed reaction is Eliminative cleavage of (1-&gt;4)-alpha-D-galacturonan methyl ester to give oligosaccharides with 4-deoxy-6-O-methyl-alpha-D-galact-4-enuronosyl groups at their non-reducing ends.. In terms of biological role, pectinolytic enzymes consist of four classes of enzymes: pectin lyase, polygalacturonase, pectin methylesterase and rhamnogalacturonase. Among pectinolytic enzymes, pectin lyase is the most important in depolymerization of pectin, since it cleaves internal glycosidic bonds of highly methylated pectins. This Emericella nidulans (strain FGSC A4 / ATCC 38163 / CBS 112.46 / NRRL 194 / M139) (Aspergillus nidulans) protein is Probable pectin lyase D (pelD).